Here is an 86-residue protein sequence, read N- to C-terminus: Cytochrome c oxidase subunit 6B1 (86 aa).

An N-acetylalanine modification is found at alanine 2. The CHCH domain occupies 27–73 (TRNCWQNYLDFHRCEKAMTAKGGDVSVCEWYRRVYKSLCPISWVSTW). The Cx9C motif motif lies at 30–40 (CWQNYLDFHRC). 2 disulfides stabilise this stretch: cysteine 30–cysteine 65 and cysteine 40–cysteine 54. The Cx10C motif motif lies at 54-65 (CEWYRRVYKSLC). Position 62 is an N6-acetyllysine (lysine 62).

Belongs to the cytochrome c oxidase subunit 6B family. Component of the cytochrome c oxidase (complex IV, CIV), a multisubunit enzyme composed of 14 subunits. The complex is composed of a catalytic core of 3 subunits MT-CO1, MT-CO2 and MT-CO3, encoded in the mitochondrial DNA, and 11 supernumerary subunits COX4I, COX5A, COX5B, COX6A, COX6B, COX6C, COX7A, COX7B, COX7C, COX8 and NDUFA4, which are encoded in the nuclear genome. The complex exists as a monomer or a dimer and forms supercomplexes (SCs) in the inner mitochondrial membrane with NADH-ubiquinone oxidoreductase (complex I, CI) and ubiquinol-cytochrome c oxidoreductase (cytochrome b-c1 complex, complex III, CIII), resulting in different assemblies (supercomplex SCI(1)III(2)IV(1) and megacomplex MCI(2)III(2)IV(2)).

Its subcellular location is the mitochondrion inner membrane. Its pathway is energy metabolism; oxidative phosphorylation. In terms of biological role, component of the cytochrome c oxidase, the last enzyme in the mitochondrial electron transport chain which drives oxidative phosphorylation. The respiratory chain contains 3 multisubunit complexes succinate dehydrogenase (complex II, CII), ubiquinol-cytochrome c oxidoreductase (cytochrome b-c1 complex, complex III, CIII) and cytochrome c oxidase (complex IV, CIV), that cooperate to transfer electrons derived from NADH and succinate to molecular oxygen, creating an electrochemical gradient over the inner membrane that drives transmembrane transport and the ATP synthase. Cytochrome c oxidase is the component of the respiratory chain that catalyzes the reduction of oxygen to water. Electrons originating from reduced cytochrome c in the intermembrane space (IMS) are transferred via the dinuclear copper A center (CU(A)) of subunit 2 and heme A of subunit 1 to the active site in subunit 1, a binuclear center (BNC) formed by heme A3 and copper B (CU(B)). The BNC reduces molecular oxygen to 2 water molecules using 4 electrons from cytochrome c in the IMS and 4 protons from the mitochondrial matrix. The protein is Cytochrome c oxidase subunit 6B1 (COX6B1) of Carlito syrichta (Philippine tarsier).